A 724-amino-acid chain; its full sequence is Methionine--tRNA ligase (724 aa).

A 'HIGH' region motif is present at residues 12-22; the sequence is PYVNNIPHLGN. Positions 143, 146, 155, and 158 each coordinate Zn(2+). The 'KMSKS' region motif lies at 330–334; it reads KFSKS. Lysine 333 is a binding site for ATP. The tRNA-binding domain maps to 560-665; sequence FREKVLLKVV…KNPIPGERII (106 aa).

The protein belongs to the class-I aminoacyl-tRNA synthetase family. MetG type 1 subfamily. As to quaternary structure, homodimer. Zn(2+) serves as cofactor.

The protein resides in the cytoplasm. It carries out the reaction tRNA(Met) + L-methionine + ATP = L-methionyl-tRNA(Met) + AMP + diphosphate. Its function is as follows. Is required not only for elongation of protein synthesis but also for the initiation of all mRNA translation through initiator tRNA(fMet) aminoacylation. The protein is Methionine--tRNA ligase of Borrelia garinii subsp. bavariensis (strain ATCC BAA-2496 / DSM 23469 / PBi) (Borreliella bavariensis).